Consider the following 76-residue polypeptide: Conotoxin ArMLCL-022 (76 aa).

The first 19 residues, methionine 1–serine 19, serve as a signal peptide directing secretion. A propeptide spanning residues asparagine 20–lysine 52 is cleaved from the precursor.

This sequence belongs to the conotoxin T superfamily. As to expression, expressed by the venom duct.

The protein localises to the secreted. This Conus arenatus (Sand-dusted cone) protein is Conotoxin ArMLCL-022.